The primary structure comprises 362 residues: Epoxyqueuosine reductase (362 aa).

Asp-143 acts as the Proton donor in catalysis. Residues 191-220 (PDSPKHQDSCGKCQACIKLCPTGAIQPGKM) form the 4Fe-4S ferredoxin-type domain. Residues Cys-200, Cys-203, Cys-206, Cys-210, Cys-226, Cys-253, Cys-256, and Cys-260 each contribute to the [4Fe-4S] cluster site.

It belongs to the QueG family. As to quaternary structure, monomer. It depends on cob(II)alamin as a cofactor. [4Fe-4S] cluster serves as cofactor.

The protein resides in the cytoplasm. It catalyses the reaction epoxyqueuosine(34) in tRNA + AH2 = queuosine(34) in tRNA + A + H2O. It participates in tRNA modification; tRNA-queuosine biosynthesis. Functionally, catalyzes the conversion of epoxyqueuosine (oQ) to queuosine (Q), which is a hypermodified base found in the wobble positions of tRNA(Asp), tRNA(Asn), tRNA(His) and tRNA(Tyr). This is Epoxyqueuosine reductase from Francisella cf. novicida (strain Fx1).